Consider the following 426-residue polypeptide: MANDKPHMNLAVIGHIDHGKSTTVGRLMFETGAVPAHIIENFRKEAESKGKGSFEFAWVMDNLKEERERGITIDIAHKRFDTAKFYFTVVDCPGHRDFVKNMITGASQADAAILVVAAPDGVMEQTKEHVFLARTLGITQLVIAINKMDAVNYDQKRFEEVKKELTQLIGMVGYKAAEILFIPMSSFKGVNISKKSPETPWYTGPTLLEALDTFKEPDKPTDKPFRLPIQDVYSISGIGTVPVGRIETGIMKKGMKVSFMPANKDGEIKSIEMHHEEQPQALPGDNVGFNVRGVGKNDIRRGDVCGPADIPPTVADEFTAQIVVLQHPSAITVGYTPVFHCHTAQIACTFVELRKKLDPRSGQTKEENPTFLKSGDAAIVQIKPSRPMVIESVKEIPQLGRFAIRDMGTTIAAGMCIAVQPKQMIR.

Positions 5-221 (KPHMNLAVIG…DTFKEPDKPT (217 aa)) constitute a tr-type G domain. Residues 14–21 (GHIDHGKS) are G1. 14–21 (GHIDHGKS) contributes to the GTP binding site. S21 lines the Mg(2+) pocket. A G2 region spans residues 70–74 (GITID). The interval 91–94 (DCPG) is G3. Residues 91–95 (DCPGH) and 146–149 (NKMD) contribute to the GTP site. The segment at 146–149 (NKMD) is G4. The G5 stretch occupies residues 185 to 187 (SSF).

This sequence belongs to the TRAFAC class translation factor GTPase superfamily. Classic translation factor GTPase family. EF-Tu/EF-1A subfamily.

It is found in the cytoplasm. The enzyme catalyses GTP + H2O = GDP + phosphate + H(+). GTP hydrolase that promotes the GTP-dependent binding of aminoacyl-tRNA to the A-site of ribosomes during protein biosynthesis. The polypeptide is Elongation factor 1-alpha (Methanosphaerula palustris (strain ATCC BAA-1556 / DSM 19958 / E1-9c)).